The sequence spans 485 residues: 4-alpha-glucanotransferase (485 aa).

This sequence belongs to the disproportionating enzyme family.

It is found in the cytoplasm. It carries out the reaction Transfers a segment of a (1-&gt;4)-alpha-D-glucan to a new position in an acceptor, which may be glucose or a (1-&gt;4)-alpha-D-glucan.. In Aquifex aeolicus (strain VF5), this protein is 4-alpha-glucanotransferase (malQ).